The primary structure comprises 163 residues: Crossover junction endodeoxyribonuclease RuvC (163 aa).

Active-site residues include aspartate 9, glutamate 76, and aspartate 148. The Mg(2+) site is built by aspartate 9, glutamate 76, and aspartate 148.

It belongs to the RuvC family. As to quaternary structure, homodimer which binds Holliday junction (HJ) DNA. The HJ becomes 2-fold symmetrical on binding to RuvC with unstacked arms; it has a different conformation from HJ DNA in complex with RuvA. In the full resolvosome a probable DNA-RuvA(4)-RuvB(12)-RuvC(2) complex forms which resolves the HJ. Mg(2+) is required as a cofactor.

It localises to the cytoplasm. It carries out the reaction Endonucleolytic cleavage at a junction such as a reciprocal single-stranded crossover between two homologous DNA duplexes (Holliday junction).. Its function is as follows. The RuvA-RuvB-RuvC complex processes Holliday junction (HJ) DNA during genetic recombination and DNA repair. Endonuclease that resolves HJ intermediates. Cleaves cruciform DNA by making single-stranded nicks across the HJ at symmetrical positions within the homologous arms, yielding a 5'-phosphate and a 3'-hydroxyl group; requires a central core of homology in the junction. The consensus cleavage sequence is 5'-(A/T)TT(C/G)-3'. Cleavage occurs on the 3'-side of the TT dinucleotide at the point of strand exchange. HJ branch migration catalyzed by RuvA-RuvB allows RuvC to scan DNA until it finds its consensus sequence, where it cleaves and resolves the cruciform DNA. In Nostoc punctiforme (strain ATCC 29133 / PCC 73102), this protein is Crossover junction endodeoxyribonuclease RuvC.